Consider the following 117-residue polypeptide: MASQTQGIQQLLAAEKKAAEKVAEARKRKARRLKQAKDEATEEIEKFRQERERAFKEFEAKHMGSREGVAAKIDADIRVKLADMDRAIQTRKDPFILEILQYVYNISPEVHKNYNHK.

It belongs to the V-ATPase G subunit family. As to quaternary structure, V-ATPase is a heteromultimeric enzyme made up of two complexes: the ATP-hydrolytic V1 complex and the proton translocation V0 complex. The V1 complex consists of three catalytic AB heterodimers that form a heterohexamer, three peripheral stalks each consisting of EG heterodimers, one central rotor including subunits D and F, and the regulatory subunits C and H. The proton translocation complex V0 consists of the proton transport subunit a, a ring of proteolipid subunits c9c'', rotary subunit d, subunits e and f, and the accessory subunits VhaAC45 and ATP6AP2.

Subunit of the V1 complex of vacuolar(H+)-ATPase (V-ATPase), a multisubunit enzyme composed of a peripheral complex (V1) that hydrolyzes ATP and a membrane integral complex (V0) that translocates protons. V-ATPase is responsible for acidifying and maintaining the pH of intracellular compartments and in some cell types, is targeted to the plasma membrane, where it is responsible for acidifying the extracellular environment. In enterocytes, acts as part of a pHCl-2 sensory pathway which mediates Tor-dependent larval growth and metabolism in response to zinc availability. Likely acts in maintaining enterocyte lysosomal acidification which consequently promotes Tor activation at the lysosome membrane. The sequence is that of V-type proton ATPase subunit G (Vha13) from Drosophila melanogaster (Fruit fly).